A 304-amino-acid chain; its full sequence is D-alanine--D-alanine ligase (304 aa).

Residues 101 to 298 form the ATP-grasp domain; it reads KKIFIKNKIL…FIKLIEWILK (198 aa). 131-184 contacts ATP; it reads EKNLKFPVVVKPINEGSSVHVYICDKTNILKNLKVLKSYNEILIEEFIPGREIQ. 3 residues coordinate Mg(2+): D253, E265, and N267.

The protein belongs to the D-alanine--D-alanine ligase family. Mg(2+) serves as cofactor. It depends on Mn(2+) as a cofactor.

It localises to the cytoplasm. It carries out the reaction 2 D-alanine + ATP = D-alanyl-D-alanine + ADP + phosphate + H(+). The protein operates within cell wall biogenesis; peptidoglycan biosynthesis. In terms of biological role, cell wall formation. The chain is D-alanine--D-alanine ligase from Pelagibacter ubique (strain HTCC1062).